Consider the following 207-residue polypeptide: N-(5'-phosphoribosyl)anthranilate isomerase (207 aa).

This sequence belongs to the TrpF family.

It carries out the reaction N-(5-phospho-beta-D-ribosyl)anthranilate = 1-(2-carboxyphenylamino)-1-deoxy-D-ribulose 5-phosphate. Its pathway is amino-acid biosynthesis; L-tryptophan biosynthesis; L-tryptophan from chorismate: step 3/5. This chain is N-(5'-phosphoribosyl)anthranilate isomerase, found in Petrotoga mobilis (strain DSM 10674 / SJ95).